The sequence spans 264 residues: Thymidylate synthase (264 aa).

R21 contacts dUMP. H51 is a binding site for (6R)-5,10-methylene-5,6,7,8-tetrahydrofolate. 126 to 127 (RR) serves as a coordination point for dUMP. C146 serves as the catalytic Nucleophile. Residues 166 to 169 (RSAD), N177, and 207 to 209 (HLY) each bind dUMP. D169 contributes to the (6R)-5,10-methylene-5,6,7,8-tetrahydrofolate binding site. A263 contacts (6R)-5,10-methylene-5,6,7,8-tetrahydrofolate.

Belongs to the thymidylate synthase family. Bacterial-type ThyA subfamily. Homodimer.

The protein resides in the cytoplasm. It carries out the reaction dUMP + (6R)-5,10-methylene-5,6,7,8-tetrahydrofolate = 7,8-dihydrofolate + dTMP. The protein operates within pyrimidine metabolism; dTTP biosynthesis. In terms of biological role, catalyzes the reductive methylation of 2'-deoxyuridine-5'-monophosphate (dUMP) to 2'-deoxythymidine-5'-monophosphate (dTMP) while utilizing 5,10-methylenetetrahydrofolate (mTHF) as the methyl donor and reductant in the reaction, yielding dihydrofolate (DHF) as a by-product. This enzymatic reaction provides an intracellular de novo source of dTMP, an essential precursor for DNA biosynthesis. This is Thymidylate synthase from Legionella pneumophila subsp. pneumophila (strain Philadelphia 1 / ATCC 33152 / DSM 7513).